The following is a 462-amino-acid chain: B3 domain-containing protein REM8 (462 aa).

3 consecutive DNA-binding regions (TF-B3) follow at residues 11–103 (NKHF…LGPS), 148–243 (CFSQ…LCSR), and 249–346 (FVKL…FSKI). The disordered stretch occupies residues 351–419 (FEAEDRRHKR…NLQKTQACSV (69 aa)). Over residues 369 to 397 (ETDKGEPSRATKMGPELEKREKTAEKGEP) the composition is skewed to basic and acidic residues. The span at 399-418 (RASNKSSGKQGNLQKTQACS) shows a compositional bias: polar residues.

The protein resides in the nucleus. The chain is B3 domain-containing protein REM8 (REM8) from Arabidopsis thaliana (Mouse-ear cress).